We begin with the raw amino-acid sequence, 424 residues long: Arogenate dehydratase 1 (424 aa).

Residues 1 to 52 constitute a chloroplast transit peptide; that stretch reads MQSLTPSSGVNLKSIIRKTSLPPGQTRFITGRVIKCGYQVDSANTVNTAGAP. The Prephenate dehydratase domain occupies 131–308; sequence RVAYQGVPGA…NVTRFVMLAR (178 aa). In terms of domain architecture, ACT spans 321–412; that stretch reads TSIVFAHEGT…SFLRVLGSYP (92 aa).

Mostly expressed in flowers, especially in petals (corollas and tubes), and, at low levels, in roots, stems, leaves, pistils, stamens, ovaries and sepals.

The protein resides in the plastid. It is found in the chloroplast stroma. The catalysed reaction is L-arogenate + H(+) = L-phenylalanine + CO2 + H2O. Its pathway is amino-acid biosynthesis; L-phenylalanine biosynthesis; L-phenylalanine from L-arogenate: step 1/1. In terms of biological role, converts L-arogenate produced from the shikimate-chorismate pathway into phenylalanine (Phe). Involved in floral volatile benzenoids and phenylpropanoids (FVBP) production. The protein is Arogenate dehydratase 1 of Petunia hybrida (Petunia).